We begin with the raw amino-acid sequence, 138 residues long: Basic phospholipase A2 ammodytoxin B (138 aa).

The N-terminal stretch at 1 to 16 (MRTLWIVAVCLIGVEG) is a signal peptide. 7 cysteine pairs are disulfide-bonded: C42-C131, C44-C60, C59-C111, C65-C138, C66-C104, C73-C97, and C91-C102. Ca(2+) is bound by residues Y43, G45, and G47. H63 is an active-site residue. Position 64 (D64) interacts with Ca(2+). The active site involves D105.

The protein belongs to the phospholipase A2 family. Group II subfamily. D49 sub-subfamily. Monomer. Binds to calmodulin, coagulation factor X (F10), M-type PLA2 receptor (R-180), 14-3-3 proteins gamma (YWHAG) and epsilon (YWHAE), and R25, a mitochondrial membrane protein. Ca(2+) serves as cofactor. In terms of tissue distribution, expressed by the venom gland.

It is found in the secreted. The protein localises to the host cytoplasm. The protein resides in the host cytosol. It catalyses the reaction a 1,2-diacyl-sn-glycero-3-phosphocholine + H2O = a 1-acyl-sn-glycero-3-phosphocholine + a fatty acid + H(+). Its function is as follows. Snake venom phospholipase A2 (PLA2) that acts as a presynaptic neurotoxin, an inhibitor of blood coagulation, and has been found to bind with high affinity to intracellular proteins. The response of indirectly stimulated neuromuscular preparations to ammodytoxin (Atx) is triphasic. The first phase, the transient inhibition of the acetylcholine (ACh) release, starts soon after the addition of Atx and lasts for several minutes. This phase is probably independent of Atx enzymatic activity. The effect may be due to the specific binding of the toxin to presynaptic receptors. These receptors, called N-type receptors, are still unidentified. It is noteworthy that a neuronal isoform of the M-type PLA2 receptor (R180) has been identified as a high-affinity receptor for Atx in neuronal plasma membranes. It was demonstrated however that this receptor is not essential for expression of neurotoxicity by Atx. The second phase corresponds to an augmentation of neurotransmitter release. A peak is reached 10-20 minutes after exposure of the preparation to Atx and is followed by a gradual reduction. In this phase, the enzymatic activity of Atx of the mammalian is not significant. It is speculated that the increased release of neurotransmitter in this phase is induced by the interference of Atx with voltage-gated potassium channels. Measurements of ionic currents showed however that voltage-gated potassium channels are not affected by Atx. The third phase of the response of neuromuscular preparations to Atx, which corresponds to a complete and irreversible paralysis, is clearly dependent on the hydrolytic activity of the toxin. In addition to its presynaptic neurotoxicity, Atx shows an anticoagulant activity by binding with high affinity to activated coagulation factor X (F10) thus inhibiting the formation of the prothrombinase complex (FX/FV) and its activity (IC(50) is 82 nM). Surprisingly, Atx was discovered to bind intracellular proteins such as calmodulin (CaM), 14-3-3 proteins gamma (YWHAG) and epsilon (YWHAE) (by similarity with AtxC), as well as R25 (by similarity with AtxC), a mitochondrial integral membrane protein found in cerebral cortex. These findings raised a doubt about the dogma of the exclusively extracellular action of PLA2s, defended by the potential instability of these molecules in the reducing environment of the eukaryotic cytosol coupled with their possible inability to act as enzymes in this cellular compartment, due to too low concentration of calcium ions. This hypothesis was challenged efficiently by demonstrating the internalization of AtxA into a culture cells, but still remains to be directly demonstrated in vivo. PLA2 catalyzes the calcium-dependent hydrolysis of the 2-acyl groups in 3-sn-phosphoglycerides. This is Basic phospholipase A2 ammodytoxin B from Vipera ammodytes ammodytes (Western sand viper).